We begin with the raw amino-acid sequence, 437 residues long: MTHLKGFDLLALGFMTFALFLGAGNIIFPPSAGMAAGEHVWSAAFGFLLTGVGLPLLTVVALARVGGGIGRLTQPIGRRAGVAFAIAVYLAIGPLFATPRTAVVSFEMGVAPFTGDGGVPLLIYTVAYFSVVLFLVLNPGRLVDRVGKVITPVLLSALLVLGGAAIFAPAGEIGSSSGEYQSAPLVQGFLQGYLTMDTLGALVFGIVIATAIRDRGISDSRLVTRYSMIAGVIAATGLSLVYLALFYLGATSQGIAGDAQNGVQILTAYVQQTFGVSGSLLLAVVITLACLTTAVGLITACGEFFSDLLPVSYKTVVIVFSLFSLLVANQGLTQLISLSVPVLVGLYPLAIVLIALSLFDRLWVSAPRVFVPVMIVALLFGIVDGLGAAKLNGWVPDVFAKLPLADQSLGWLLPVSIALVLAVVCDRLLGKPREAVA.

12 helical membrane passes run 9–29, 43–63, 80–100, 117–137, 149–169, 192–212, 228–248, 280–300, 308–328, 335–355, 369–389, and 404–424; these read LLAL…IIFP, AAFG…VALA, AGVA…ATPR, GGVP…FLVL, VITP…IFAP, GYLT…ATAI, MIAG…LFYL, LLLA…LITA, LLPV…LLVA, LISL…VLIA, VFVP…LGAA, and LADQ…LAVV.

It belongs to the branched chain amino acid transporter family.

Its subcellular location is the cell inner membrane. In terms of biological role, component of the LIV-II transport system for branched-chain amino acids. BraB is specific for isoleucine, leucine and valine. The LIV-II transport system is coupled to sodium and lithium ions. In Pseudomonas aeruginosa (strain ATCC 15692 / DSM 22644 / CIP 104116 / JCM 14847 / LMG 12228 / 1C / PRS 101 / PAO1), this protein is Branched-chain amino acid transport system 2 carrier protein (braB).